The sequence spans 357 residues: Chorismate synthase (357 aa).

Arg46 serves as a coordination point for NADP(+). FMN is bound by residues 123 to 125 (RSS), 235 to 236 (NA), Gly275, 290 to 294 (KPTPS), and Arg316.

This sequence belongs to the chorismate synthase family. As to quaternary structure, homotetramer. Requires FMNH2 as cofactor.

It catalyses the reaction 5-O-(1-carboxyvinyl)-3-phosphoshikimate = chorismate + phosphate. The protein operates within metabolic intermediate biosynthesis; chorismate biosynthesis; chorismate from D-erythrose 4-phosphate and phosphoenolpyruvate: step 7/7. In terms of biological role, catalyzes the anti-1,4-elimination of the C-3 phosphate and the C-6 proR hydrogen from 5-enolpyruvylshikimate-3-phosphate (EPSP) to yield chorismate, which is the branch point compound that serves as the starting substrate for the three terminal pathways of aromatic amino acid biosynthesis. This reaction introduces a second double bond into the aromatic ring system. The polypeptide is Chorismate synthase (Nitratiruptor sp. (strain SB155-2)).